The primary structure comprises 330 residues: 4-hydroxythreonine-4-phosphate dehydrogenase (330 aa).

The substrate site is built by His133 and Thr134. A divalent metal cation-binding residues include His163, His208, and His263. Substrate contacts are provided by Lys271, Asn280, and Arg289.

Belongs to the PdxA family. As to quaternary structure, homodimer. It depends on Zn(2+) as a cofactor. Requires Mg(2+) as cofactor. The cofactor is Co(2+).

The protein resides in the cytoplasm. It carries out the reaction 4-(phosphooxy)-L-threonine + NAD(+) = 3-amino-2-oxopropyl phosphate + CO2 + NADH. The protein operates within cofactor biosynthesis; pyridoxine 5'-phosphate biosynthesis; pyridoxine 5'-phosphate from D-erythrose 4-phosphate: step 4/5. Catalyzes the NAD(P)-dependent oxidation of 4-(phosphooxy)-L-threonine (HTP) into 2-amino-3-oxo-4-(phosphooxy)butyric acid which spontaneously decarboxylates to form 3-amino-2-oxopropyl phosphate (AHAP). The polypeptide is 4-hydroxythreonine-4-phosphate dehydrogenase (Azoarcus sp. (strain BH72)).